Here is a 143-residue protein sequence, read N- to C-terminus: MTPVRRRKLFILLFALSVLSAAAALVLYALRQNISLFYTPTQIVAGEAPAKHHIRVGGMVEANSIVRAKKGLDVQFKITDFENTIVVTYSGILPDLFREGQGIVAEGEVTDNHHFHAIQVLAKHDANYMPPQVKSALADKVKQ.

The Cytoplasmic portion of the chain corresponds to 1-8; sequence MTPVRRRK. Residues 9–29 form a helical; Signal-anchor for type II membrane protein membrane-spanning segment; sequence LFILLFALSVLSAAAALVLYA. Residues 30-143 are Periplasmic-facing; it reads LRQNISLFYT…KSALADKVKQ (114 aa). Heme contacts are provided by His-124 and Tyr-128.

The protein belongs to the CcmE/CycJ family.

It localises to the cell inner membrane. In terms of biological role, heme chaperone required for the biogenesis of c-type cytochromes. Transiently binds heme delivered by CcmC and transfers the heme to apo-cytochromes in a process facilitated by CcmF and CcmH. This is Cytochrome c-type biogenesis protein CcmE from Legionella pneumophila.